The following is a 384-amino-acid chain: Cyclohexane-1-carbonyl-CoA dehydrogenase (384 aa).

This sequence belongs to the acyl-CoA dehydrogenase family. Homotetramer. It depends on FAD as a cofactor.

It catalyses the reaction cyclohexane-1-carbonyl-CoA + oxidized [electron-transfer flavoprotein] + H(+) = cyclohex-1-ene-1-carbonyl-CoA + reduced [electron-transfer flavoprotein]. Its function is as follows. Mediates the conversion of cyclohexane-1-carbonyl-CoA (ChCoA) into cyclohex-1-ene-1-carbonyl-CoA in biosynthesis of cyclohexane-1-carboxylate, a by-product produced during fermentation of benzoate and crotonate to acetate. The chain is Cyclohexane-1-carbonyl-CoA dehydrogenase from Syntrophus aciditrophicus (strain SB).